A 1340-amino-acid polypeptide reads, in one-letter code: Serine/threonine-protein phosphatase 7 long form homolog (1340 aa).

D660 and H662 together coordinate Mn(2+). H722 serves as the catalytic Proton donor. Position 773 (H773) interacts with Mn(2+). 4 disordered regions span residues 788 to 814 (QERN…DRSE), 1012 to 1093 (KSMD…SRTR), 1196 to 1218 (TDGA…SEDI), and 1266 to 1340 (FTNL…DMDS). Positions 790–799 (RNRKRKRTQK) are enriched in basic residues. Over residues 1018–1027 (EQMEVDEKDD) the composition is skewed to acidic residues. The span at 1049–1080 (GDRDMVDFSDKTENGSKEADHSETAEISKDLS) shows a compositional bias: basic and acidic residues. Residues 1203–1213 (EPSTSKLNYSE) are compositionally biased toward polar residues. Basic and acidic residues-rich tracts occupy residues 1266–1289 (FTNL…ERVI) and 1318–1328 (DSVDSKNKGSL).

It belongs to the PPP phosphatase family. PP-7 subfamily. Mn(2+) serves as cofactor. In terms of tissue distribution, expressed in root tips, the shoot apical meristem (SAM), leaf vasculature, hydathodes and mature flowers.

It is found in the nucleus. It carries out the reaction O-phospho-L-seryl-[protein] + H2O = L-seryl-[protein] + phosphate. The enzyme catalyses O-phospho-L-threonyl-[protein] + H2O = L-threonyl-[protein] + phosphate. Its function is as follows. Maybe required to maintain cell division activity in meristematic cells. The polypeptide is Serine/threonine-protein phosphatase 7 long form homolog (Arabidopsis thaliana (Mouse-ear cress)).